The primary structure comprises 250 residues: tRNA pseudouridine synthase A (250 aa).

Catalysis depends on aspartate 52, which acts as the Nucleophile. Residue tyrosine 111 coordinates substrate.

This sequence belongs to the tRNA pseudouridine synthase TruA family. Homodimer.

The catalysed reaction is uridine(38/39/40) in tRNA = pseudouridine(38/39/40) in tRNA. Its function is as follows. Formation of pseudouridine at positions 38, 39 and 40 in the anticodon stem and loop of transfer RNAs. The chain is tRNA pseudouridine synthase A from Methylorubrum extorquens (strain CM4 / NCIMB 13688) (Methylobacterium extorquens).